The following is a 119-amino-acid chain: Large ribosomal subunit protein uL24 (119 aa).

Belongs to the universal ribosomal protein uL24 family. As to quaternary structure, part of the 50S ribosomal subunit.

In terms of biological role, one of two assembly initiator proteins, it binds directly to the 5'-end of the 23S rRNA, where it nucleates assembly of the 50S subunit. Its function is as follows. One of the proteins that surrounds the polypeptide exit tunnel on the outside of the subunit. The polypeptide is Large ribosomal subunit protein uL24 (Arthrobacter sp. (strain FB24)).